The primary structure comprises 161 residues: Phosphopantetheine adenylyltransferase (161 aa).

Residue Ser9 participates in substrate binding. ATP-binding positions include 9 to 10 and His17; that span reads SF. Lys41, Leu73, and Arg87 together coordinate substrate. Residues 88–90, Glu98, and 123–129 each bind ATP; these read GLR and YTFISSS.

The protein belongs to the bacterial CoaD family. In terms of assembly, homohexamer. Mg(2+) serves as cofactor.

The protein localises to the cytoplasm. It carries out the reaction (R)-4'-phosphopantetheine + ATP + H(+) = 3'-dephospho-CoA + diphosphate. It functions in the pathway cofactor biosynthesis; coenzyme A biosynthesis; CoA from (R)-pantothenate: step 4/5. In terms of biological role, reversibly transfers an adenylyl group from ATP to 4'-phosphopantetheine, yielding dephospho-CoA (dPCoA) and pyrophosphate. The polypeptide is Phosphopantetheine adenylyltransferase (Syntrophomonas wolfei subsp. wolfei (strain DSM 2245B / Goettingen)).